Here is a 210-residue protein sequence, read N- to C-terminus: Imidazole glycerol phosphate synthase subunit HisH (210 aa).

The region spanning 3–208 (PIAIIDYGMG…GELVRHAGNA (206 aa)) is the Glutamine amidotransferase type-1 domain. Residue cysteine 81 is the Nucleophile of the active site. Active-site residues include histidine 183 and glutamate 185.

In terms of assembly, heterodimer of HisH and HisF.

The protein resides in the cytoplasm. The catalysed reaction is 5-[(5-phospho-1-deoxy-D-ribulos-1-ylimino)methylamino]-1-(5-phospho-beta-D-ribosyl)imidazole-4-carboxamide + L-glutamine = D-erythro-1-(imidazol-4-yl)glycerol 3-phosphate + 5-amino-1-(5-phospho-beta-D-ribosyl)imidazole-4-carboxamide + L-glutamate + H(+). It catalyses the reaction L-glutamine + H2O = L-glutamate + NH4(+). Its pathway is amino-acid biosynthesis; L-histidine biosynthesis; L-histidine from 5-phospho-alpha-D-ribose 1-diphosphate: step 5/9. Functionally, IGPS catalyzes the conversion of PRFAR and glutamine to IGP, AICAR and glutamate. The HisH subunit catalyzes the hydrolysis of glutamine to glutamate and ammonia as part of the synthesis of IGP and AICAR. The resulting ammonia molecule is channeled to the active site of HisF. In Moorella thermoacetica (strain ATCC 39073 / JCM 9320), this protein is Imidazole glycerol phosphate synthase subunit HisH.